The chain runs to 97 residues: Protein GLUTAMINE DUMPER 7 (97 aa).

The Extracellular portion of the chain corresponds to 1-25; that stretch reads MSLHRDSMVPVNSRLENMDSPILSK. The helical transmembrane segment at 26-46 threads the bilayer; sequence ICAWGVMLGLFALSLFAMAYA. Topologically, residues 47 to 97 are cytoplasmic; that stretch reads CYHKQTSNSCIEEKQGKKQVLKPLDMEPKIVVIMAGNENPTFFAKPTQINA. The short motif at 78–82 is the VIMAG element; sequence VIMAG.

It belongs to the GLUTAMINE DUMPER 1 (TC 9.B.60) family. Expressed in the vascular tissues, even in the minor veins of the leaves.

Its subcellular location is the membrane. In terms of biological role, probable subunit of an amino acid transporter involved in the regulation of the amino acid metabolism. Stimulates amino acid export by activating nonselective amino acid facilitators. In Arabidopsis thaliana (Mouse-ear cress), this protein is Protein GLUTAMINE DUMPER 7 (GDU7).